Here is a 291-residue protein sequence, read N- to C-terminus: Bifunctional protein FolD (291 aa).

Residues 168–170 (GRG), threonine 195, and valine 236 each bind NADP(+).

Belongs to the tetrahydrofolate dehydrogenase/cyclohydrolase family. Homodimer.

The enzyme catalyses (6R)-5,10-methylene-5,6,7,8-tetrahydrofolate + NADP(+) = (6R)-5,10-methenyltetrahydrofolate + NADPH. It carries out the reaction (6R)-5,10-methenyltetrahydrofolate + H2O = (6R)-10-formyltetrahydrofolate + H(+). It participates in one-carbon metabolism; tetrahydrofolate interconversion. In terms of biological role, catalyzes the oxidation of 5,10-methylenetetrahydrofolate to 5,10-methenyltetrahydrofolate and then the hydrolysis of 5,10-methenyltetrahydrofolate to 10-formyltetrahydrofolate. In Bifidobacterium longum (strain DJO10A), this protein is Bifunctional protein FolD.